The following is a 301-amino-acid chain: Recombination-associated protein RdgC (301 aa).

It belongs to the RdgC family.

Its subcellular location is the cytoplasm. The protein localises to the nucleoid. Functionally, may be involved in recombination. The protein is Recombination-associated protein RdgC of Stenotrophomonas maltophilia (strain R551-3).